Consider the following 111-residue polypeptide: Ribonuclease P protein component (111 aa).

The protein belongs to the RnpA family. As to quaternary structure, consists of a catalytic RNA component (M1 or rnpB) and a protein subunit.

It catalyses the reaction Endonucleolytic cleavage of RNA, removing 5'-extranucleotides from tRNA precursor.. Functionally, RNaseP catalyzes the removal of the 5'-leader sequence from pre-tRNA to produce the mature 5'-terminus. It can also cleave other RNA substrates such as 4.5S RNA. The protein component plays an auxiliary but essential role in vivo by binding to the 5'-leader sequence and broadening the substrate specificity of the ribozyme. This Borrelia garinii subsp. bavariensis (strain ATCC BAA-2496 / DSM 23469 / PBi) (Borreliella bavariensis) protein is Ribonuclease P protein component.